The chain runs to 340 residues: Aliphatic sulfonates import ATP-binding protein SsuB 1 (340 aa).

Residues 44-72 form a disordered region; it reads THHHARVAAQGHARGDAQPPAGALARDDG. One can recognise an ABC transporter domain in the interval 80–299; it reads VQLRGVGKRY…ARASAGFAAL (220 aa). 112–119 provides a ligand contact to ATP; that stretch reads GRSGCGKS.

Belongs to the ABC transporter superfamily. Aliphatic sulfonates importer (TC 3.A.1.17.2) family. In terms of assembly, the complex is composed of two ATP-binding proteins (SsuB), two transmembrane proteins (SsuC) and a solute-binding protein (SsuA).

The protein localises to the cell inner membrane. The catalysed reaction is ATP + H2O + aliphatic sulfonate-[sulfonate-binding protein]Side 1 = ADP + phosphate + aliphatic sulfonateSide 2 + [sulfonate-binding protein]Side 1.. Its function is as follows. Part of the ABC transporter complex SsuABC involved in aliphatic sulfonates import. Responsible for energy coupling to the transport system. The protein is Aliphatic sulfonates import ATP-binding protein SsuB 1 of Paraburkholderia xenovorans (strain LB400).